We begin with the raw amino-acid sequence, 95 residues long: Acylphosphatase 2 (95 aa).

The region spanning 6–93 (RVIVTVQGRV…PLPPGFEVRP (88 aa)) is the Acylphosphatase-like domain. Residues arginine 21 and asparagine 39 contribute to the active site.

It belongs to the acylphosphatase family.

The enzyme catalyses an acyl phosphate + H2O = a carboxylate + phosphate + H(+). In Ralstonia nicotianae (strain ATCC BAA-1114 / GMI1000) (Ralstonia solanacearum), this protein is Acylphosphatase 2 (acyP2).